Consider the following 420-residue polypeptide: G2/mitotic-specific cyclin-A (420 aa).

The tract at residues 64 to 93 (VQGSRIQPTRAAKEKLKPPQNISDSQLVND) is disordered. A compositionally biased stretch (polar residues) spans 83–93 (QNISDSQLVND).

This sequence belongs to the cyclin family. Cyclin AB subfamily.

Its function is as follows. Essential for the control of the cell cycle at the G2/M (mitosis) transition. Interacts with the CDC2 and CDK2 protein kinases to form MPF. G2/M cyclins accumulate steadily during G2 and are abruptly destroyed at mitosis. This Hydra viridissima (Green hydra) protein is G2/mitotic-specific cyclin-A.